Reading from the N-terminus, the 273-residue chain is Thiazole synthase (273 aa).

K111 functions as the Schiff-base intermediate with DXP in the catalytic mechanism. Residues G172, 198–199, and 220–221 each bind 1-deoxy-D-xylulose 5-phosphate; these read AG and NS. Residues 251 to 273 are disordered; it reads RLPRRGQASASSPTTGLISGKDK. Residues 258-267 show a composition bias toward polar residues; sequence ASASSPTTGL.

Belongs to the ThiG family. In terms of assembly, homotetramer. Forms heterodimers with either ThiH or ThiS.

The protein resides in the cytoplasm. The catalysed reaction is [ThiS sulfur-carrier protein]-C-terminal-Gly-aminoethanethioate + 2-iminoacetate + 1-deoxy-D-xylulose 5-phosphate = [ThiS sulfur-carrier protein]-C-terminal Gly-Gly + 2-[(2R,5Z)-2-carboxy-4-methylthiazol-5(2H)-ylidene]ethyl phosphate + 2 H2O + H(+). Its pathway is cofactor biosynthesis; thiamine diphosphate biosynthesis. In terms of biological role, catalyzes the rearrangement of 1-deoxy-D-xylulose 5-phosphate (DXP) to produce the thiazole phosphate moiety of thiamine. Sulfur is provided by the thiocarboxylate moiety of the carrier protein ThiS. In vitro, sulfur can be provided by H(2)S. This chain is Thiazole synthase, found in Synechococcus sp. (strain CC9902).